The sequence spans 319 residues: Dehydrogenase/reductase SDR family member 9 (319 aa).

The N-terminal stretch at 1–20 is a signal peptide; the sequence is MLLWVLALLFLCAFLWNYKG. Residues 34-58 and Asp83 contribute to the NAD(+) site; that span reads ITGCDSGFGNLAARTFDRKGFRVIA. Ser164 is a binding site for substrate. The active-site Proton acceptor is the Tyr176. An NAD(+)-binding site is contributed by Lys180.

It belongs to the short-chain dehydrogenases/reductases (SDR) family. As to quaternary structure, homotetramer. In terms of tissue distribution, highly expressed in epithelium of estrus uterus.

Its subcellular location is the microsome membrane. It localises to the endoplasmic reticulum membrane. The enzyme catalyses 3beta-hydroxy-5alpha-pregnane-20-one + NAD(+) = 5alpha-pregnane-3,20-dione + NADH + H(+). It catalyses the reaction 17beta-hydroxy-5alpha-androstan-3-one + NAD(+) = 5alpha-androstan-3,17-dione + NADH + H(+). The catalysed reaction is androsterone + NAD(+) = 5alpha-androstan-3,17-dione + NADH + H(+). It carries out the reaction 5alpha-androstane-3alpha,17beta-diol + NAD(+) = 17beta-hydroxy-5alpha-androstan-3-one + NADH + H(+). The enzyme catalyses all-trans-retinol + NAD(+) = all-trans-retinal + NADH + H(+). It catalyses the reaction 3alpha-hydroxy-5alpha-pregnan-20-one + NAD(+) = 5alpha-pregnane-3,20-dione + NADH + H(+). Functionally, 3-alpha-hydroxysteroid dehydrogenase that converts 3-alpha-tetrahydroprogesterone (allopregnanolone) to dihydroxyprogesterone and 3-alpha-androstanediol to dihydroxyprogesterone. Plays also role in the biosynthesis of retinoic acid from retinaldehyde. Can utilize both NADH and NADPH. The polypeptide is Dehydrogenase/reductase SDR family member 9 (Dhrs9) (Rattus norvegicus (Rat)).